Reading from the N-terminus, the 628-residue chain is Chaperone protein DnaK (628 aa).

Residue Thr-174 is modified to Phosphothreonine; by autocatalysis. The segment at 589 to 628 is disordered; sequence AAGGAGPDMGAGAGPDMGAGASNGSAPYGDDVVDGDYKEV. A compositionally biased stretch (gly residues) spans 591 to 605; the sequence is GGAGPDMGAGAGPDM.

Belongs to the heat shock protein 70 family.

Functionally, acts as a chaperone. This is Chaperone protein DnaK from Lachnospira eligens (strain ATCC 27750 / DSM 3376 / VPI C15-48 / C15-B4) (Eubacterium eligens).